A 973-amino-acid chain; its full sequence is Coatomer subunit beta (973 aa).

HEAT repeat units follow at residues 98 to 133 (HEMI…REAE) and 134 to 170 (LLEQ…VSEH). A Phosphoserine modification is found at serine 181. HEAT repeat units follow at residues 279-317 (NVLV…NNVG) and 318-354 (ALEE…SRNA). Serine 540 is modified (phosphoserine).

In terms of assembly, oligomeric complex that consists of at least the alpha, beta, beta', gamma, delta, epsilon and zeta subunits. The complex interacts with ARF1 and PAB1. Post-translationally, the N-terminus is blocked.

It is found in the cytoplasm. It localises to the golgi apparatus membrane. The protein resides in the cytoplasmic vesicle. The protein localises to the COPI-coated vesicle membrane. Its function is as follows. The coatomer is a cytosolic protein complex that binds to dilysine motifs and reversibly associates with Golgi non-clathrin-coated vesicles, which further mediate biosynthetic protein transport from the ER, via the Golgi up to the trans Golgi network. Coatomer complex is required for budding from Golgi membranes, and is essential for the retrograde Golgi-to-ER transport of dilysine-tagged proteins. Required for mitochondrial morphology. In Saccharomyces cerevisiae (strain ATCC 204508 / S288c) (Baker's yeast), this protein is Coatomer subunit beta (SEC26).